The primary structure comprises 41 residues: MKNTVKLEQFVALKEKDLQKIKGGEMRISRIILDFLFLRKK.

Positions 1–24 are excised as a propeptide; the sequence is MKNTVKLEQFVALKEKDLQKIKGG.

It belongs to the ComC family.

It localises to the secreted. Functionally, acts as a pheromone, induces cells to develop competence for genetic transformation. This Streptococcus pneumoniae serotype 4 (strain ATCC BAA-334 / TIGR4) protein is Competence-stimulating peptide type 2 (comC2).